The following is a 557-amino-acid chain: Urocanate hydratase (557 aa).

NAD(+) is bound by residues glycine 52 to glycine 53, glutamine 130, glycine 176 to glycine 178, glutamate 196, arginine 201, asparagine 242 to alanine 243, glutamine 263 to histidine 267, tyrosine 273 to leucine 274, and tyrosine 322. Cysteine 410 is an active-site residue. Glycine 492 serves as a coordination point for NAD(+).

It belongs to the urocanase family. NAD(+) is required as a cofactor.

It is found in the cytoplasm. The catalysed reaction is 4-imidazolone-5-propanoate = trans-urocanate + H2O. Its pathway is amino-acid degradation; L-histidine degradation into L-glutamate; N-formimidoyl-L-glutamate from L-histidine: step 2/3. Its function is as follows. Catalyzes the conversion of urocanate to 4-imidazolone-5-propionate. This is Urocanate hydratase from Pseudoalteromonas translucida (strain TAC 125).